Consider the following 312-residue polypeptide: tRNA dimethylallyltransferase (312 aa).

11–18 serves as a coordination point for ATP; it reads GPTAVGKT. Substrate is bound at residue 13–18; that stretch reads TAVGKT. The tract at residues 159–163 is interaction with substrate tRNA; sequence QRVLR.

The protein belongs to the IPP transferase family. In terms of assembly, monomer. Mg(2+) serves as cofactor.

It carries out the reaction adenosine(37) in tRNA + dimethylallyl diphosphate = N(6)-dimethylallyladenosine(37) in tRNA + diphosphate. Its function is as follows. Catalyzes the transfer of a dimethylallyl group onto the adenine at position 37 in tRNAs that read codons beginning with uridine, leading to the formation of N6-(dimethylallyl)adenosine (i(6)A). This is tRNA dimethylallyltransferase from Macrococcus caseolyticus (strain JCSC5402) (Macrococcoides caseolyticum).